The following is a 230-amino-acid chain: Large ribosomal subunit protein uL1 (230 aa).

The protein belongs to the universal ribosomal protein uL1 family. As to quaternary structure, part of the 50S ribosomal subunit.

Its function is as follows. Binds directly to 23S rRNA. The L1 stalk is quite mobile in the ribosome, and is involved in E site tRNA release. Functionally, protein L1 is also a translational repressor protein, it controls the translation of the L11 operon by binding to its mRNA. The protein is Large ribosomal subunit protein uL1 of Lactobacillus gasseri (strain ATCC 33323 / DSM 20243 / BCRC 14619 / CIP 102991 / JCM 1131 / KCTC 3163 / NCIMB 11718 / NCTC 13722 / AM63).